Reading from the N-terminus, the 350-residue chain is tRNA uridine(34) hydroxylase (350 aa).

Residues 146-240 (DDPDALFIDM…YARKAREQGL (95 aa)) form the Rhodanese domain. Cys200 acts as the Cysteine persulfide intermediate in catalysis.

This sequence belongs to the TrhO family.

It catalyses the reaction uridine(34) in tRNA + AH2 + O2 = 5-hydroxyuridine(34) in tRNA + A + H2O. Catalyzes oxygen-dependent 5-hydroxyuridine (ho5U) modification at position 34 in tRNAs. This chain is tRNA uridine(34) hydroxylase, found in Shigella dysenteriae serotype 1 (strain Sd197).